A 518-amino-acid polypeptide reads, in one-letter code: MQVTSVGHAGFLIESRAGSILCDPWVNPAYFASWFPFPDNSQLDWDALGDVDYLYVSHLHKDHFDPEHLRRYVNKDAVVLLPDYPVPDLRRELEKLGFHNFFETTDSVKHTVSGPKGDLDVMIIALRAPADGPIGDSGLVVSDRVTTVFNMNDARPVDLDVLHTDFGQIDVHMLQYSGAIWYPMVYDMPARAKEAFGIQKRQRQMDRCRQYIAQVGATWVVPSAGPPCFLDPELRDLNDDHGDPANIFPDQMVFLEQLRIHGHDGGLLMIPGSTADFTGSTLNSLTHPVDDPESIFTTGKAAYIEDYAQRMAPVLAAEKARWAPSAGEPMLEALRALFEPIMTQTDQICDGIGYPVELRLTGRDHNETVVLDFPKRVVREPIPDEKFRYGFEIPAALVRTVLRDEEPDWVNTIFLSTRFRAWRVGGYNEYLYTFFKCLTDERIAYADGWFAEAHDDSSSITLDGFQIQRRCPHLKADLSKFGVVEGNTLTCNLHGWQWNLENGRCLTTKGHELRCQKL.

Lys-375 participates in a covalent cross-link: Isoglutamyl lysine isopeptide (Lys-Gln) (interchain with Q-Cter in protein Pup). A Rieske domain is found at 431 to 518 (LYTFFKCLTD…KGHELRCQKL (88 aa)). Residues Cys-471, His-473, Cys-491, and His-494 each contribute to the [2Fe-2S] cluster site.

[2Fe-2S] cluster is required as a cofactor.

The protein is Putative Rieske 2Fe-2S iron-sulfur protein MSMEG_6410/MSMEI_6242 of Mycolicibacterium smegmatis (strain ATCC 700084 / mc(2)155) (Mycobacterium smegmatis).